A 381-amino-acid chain; its full sequence is Neuropeptide Y receptor type 2 (381 aa).

Residues 1–37 (MGPIGTEADENQTVEEIKVEPYGPGHTTPRGELAPDP) are disordered. At 1–52 (MGPIGTEADENQTVEEIKVEPYGPGHTTPRGELAPDPEPELIDSTKLTEVRV) the chain is on the extracellular side. Asparagine 11 carries an N-linked (GlcNAc...) asparagine glycan. The helical transmembrane segment at 53-73 (VLILAYCSIILLGVVGNSLVI) threads the bilayer. Topologically, residues 74–87 (HVVIKFKSMRTVTN) are cytoplasmic. Residues 88 to 108 (FFIANLAVADLLVNTLCLPFT) form a helical membrane-spanning segment. Over 109-125 (LTYTLMGEWKMGPVLCH) the chain is Extracellular. A disulfide bridge links cysteine 124 with cysteine 204. A helical membrane pass occupies residues 126-146 (LVPYAQGLAVQVSTVTLTVIA). The Cytoplasmic segment spans residues 147–166 (LDRHRCIVYHLDSKISKQNS). Residues 167 to 187 (FLIIGLAWGISALLASPLAIF) traverse the membrane as a helical segment. The Extracellular portion of the chain corresponds to 188-217 (REYSLIEIIPDFEIVACTEKWPGEEKSIYG). Residues 218–238 (TVYSLSSLLILYVLPLGIISV) form a helical membrane-spanning segment. Topologically, residues 239 to 269 (SYVRIWSKLKNHVSPGAANDHYHQRRQKTTK) are cytoplasmic. A helical transmembrane segment spans residues 270 to 290 (MLVFVVVVFAVSWLPLHAFQL). Topologically, residues 291 to 305 (AVDIDSQVLDLKEYK) are extracellular. Residues 306-326 (LIFTVFHIIAMCSTFANPLLY) form a helical membrane-spanning segment. At 327–381 (GWMNSNYRKAFLSAFRCQQRLDAIQSEVCVTGKAKTNVEVEKNHGAADSAEATNV) the chain is on the cytoplasmic side. Cysteine 343 is lipidated: S-palmitoyl cysteine.

It belongs to the G-protein coupled receptor 1 family.

It is found in the cell membrane. Receptor for neuropeptide Y and peptide YY. This is Neuropeptide Y receptor type 2 (NPY2R) from Cavia porcellus (Guinea pig).